Here is a 177-residue protein sequence, read N- to C-terminus: Large ribosomal subunit protein uL6 (177 aa).

This sequence belongs to the universal ribosomal protein uL6 family. As to quaternary structure, part of the 50S ribosomal subunit.

In terms of biological role, this protein binds to the 23S rRNA, and is important in its secondary structure. It is located near the subunit interface in the base of the L7/L12 stalk, and near the tRNA binding site of the peptidyltransferase center. The chain is Large ribosomal subunit protein uL6 from Vibrio vulnificus (strain CMCP6).